The following is a 270-amino-acid chain: 4-hydroxy-tetrahydrodipicolinate reductase (270 aa).

Residues 11-16 (GAGGRM) and Glu37 each bind NAD(+). NADP(+) is bound at residue Arg38. NAD(+) contacts are provided by residues 101–103 (GTT) and 125–128 (APNM). The active-site Proton donor/acceptor is His158. Position 159 (His159) interacts with (S)-2,3,4,5-tetrahydrodipicolinate. Lys162 acts as the Proton donor in catalysis. 168–169 (GT) is a (S)-2,3,4,5-tetrahydrodipicolinate binding site.

This sequence belongs to the DapB family.

The protein localises to the cytoplasm. The catalysed reaction is (S)-2,3,4,5-tetrahydrodipicolinate + NAD(+) + H2O = (2S,4S)-4-hydroxy-2,3,4,5-tetrahydrodipicolinate + NADH + H(+). It carries out the reaction (S)-2,3,4,5-tetrahydrodipicolinate + NADP(+) + H2O = (2S,4S)-4-hydroxy-2,3,4,5-tetrahydrodipicolinate + NADPH + H(+). It participates in amino-acid biosynthesis; L-lysine biosynthesis via DAP pathway; (S)-tetrahydrodipicolinate from L-aspartate: step 4/4. Functionally, catalyzes the conversion of 4-hydroxy-tetrahydrodipicolinate (HTPA) to tetrahydrodipicolinate. The polypeptide is 4-hydroxy-tetrahydrodipicolinate reductase (Shewanella sp. (strain W3-18-1)).